A 444-amino-acid polypeptide reads, in one-letter code: Trigger factor (444 aa).

The 86-residue stretch at 160–245 folds into the PPIase FKBP-type domain; the sequence is DMQVTFDFEG…VKQVEKPKLP (86 aa).

It belongs to the FKBP-type PPIase family. Tig subfamily.

It is found in the cytoplasm. It carries out the reaction [protein]-peptidylproline (omega=180) = [protein]-peptidylproline (omega=0). Involved in protein export. Acts as a chaperone by maintaining the newly synthesized protein in an open conformation. Functions as a peptidyl-prolyl cis-trans isomerase. This chain is Trigger factor, found in Acinetobacter baylyi (strain ATCC 33305 / BD413 / ADP1).